Reading from the N-terminus, the 868-residue chain is Leucine--tRNA ligase (868 aa).

Positions 42–52 match the 'HIGH' region motif; that stretch reads PYPSGKLHMGH. The short motif at 627-631 is the 'KMSKS' region element; that stretch reads KMSKS. Lys-630 is a binding site for ATP.

The protein belongs to the class-I aminoacyl-tRNA synthetase family.

Its subcellular location is the cytoplasm. The enzyme catalyses tRNA(Leu) + L-leucine + ATP = L-leucyl-tRNA(Leu) + AMP + diphosphate. This chain is Leucine--tRNA ligase, found in Pseudomonas putida (strain ATCC 47054 / DSM 6125 / CFBP 8728 / NCIMB 11950 / KT2440).